A 124-amino-acid polypeptide reads, in one-letter code: Large ribosomal subunit protein bL12c (124 aa).

This sequence belongs to the bacterial ribosomal protein bL12 family. As to quaternary structure, homodimer. Part of the ribosomal stalk of the 50S ribosomal subunit. Forms a multimeric L10(L12)X complex, where L10 forms an elongated spine to which 2 to 4 L12 dimers bind in a sequential fashion. Binds GTP-bound translation factors.

The protein resides in the plastid. Its subcellular location is the chloroplast. In terms of biological role, forms part of the ribosomal stalk which helps the ribosome interact with GTP-bound translation factors. Is thus essential for accurate translation. The chain is Large ribosomal subunit protein bL12c from Cyanidioschyzon merolae (strain NIES-3377 / 10D) (Unicellular red alga).